Reading from the N-terminus, the 360-residue chain is Photosystem II protein D1 (360 aa).

3 consecutive transmembrane segments (helical) span residues Tyr-29–Thr-46, Gln-118–Leu-133, and Trp-142–Ala-156. Tyr-126 is a binding site for pheophytin a. Asp-170 and Glu-189 together coordinate [CaMn4O5] cluster. Residues Phe-197 to Leu-218 traverse the membrane as a helical segment. Chlorophyll a is bound at residue His-198. Residues His-215 and Ser-264–Phe-265 contribute to the a quinone site. Residue His-215 participates in Fe cation binding. His-272 is a Fe cation binding site. A helical membrane pass occupies residues Phe-274 to Met-288. The [CaMn4O5] cluster site is built by His-332, Glu-333, Asp-342, and Ala-344. Residues Ser-345 to Gly-360 constitute a propeptide that is removed on maturation.

Belongs to the reaction center PufL/M/PsbA/D family. In terms of assembly, PSII is composed of 1 copy each of membrane proteins PsbA, PsbB, PsbC, PsbD, PsbE, PsbF, PsbH, PsbI, PsbJ, PsbK, PsbL, PsbM, PsbT, PsbX, PsbY, PsbZ, Psb30/Ycf12, peripheral proteins PsbO, CyanoQ (PsbQ), PsbU, PsbV and a large number of cofactors. It forms dimeric complexes. It depends on The D1/D2 heterodimer binds P680, chlorophylls that are the primary electron donor of PSII, and subsequent electron acceptors. It shares a non-heme iron and each subunit binds pheophytin, quinone, additional chlorophylls, carotenoids and lipids. D1 provides most of the ligands for the Mn4-Ca-O5 cluster of the oxygen-evolving complex (OEC). There is also a Cl(-1) ion associated with D1 and D2, which is required for oxygen evolution. The PSII complex binds additional chlorophylls, carotenoids and specific lipids. as a cofactor. Tyr-161 forms a radical intermediate that is referred to as redox-active TyrZ, YZ or Y-Z. Post-translationally, C-terminally processed by CtpA; processing is essential to allow assembly of the oxygen-evolving complex and thus photosynthetic growth.

It is found in the cellular thylakoid membrane. The enzyme catalyses 2 a plastoquinone + 4 hnu + 2 H2O = 2 a plastoquinol + O2. Photosystem II (PSII) is a light-driven water:plastoquinone oxidoreductase that uses light energy to abstract electrons from H(2)O, generating O(2) and a proton gradient subsequently used for ATP formation. It consists of a core antenna complex that captures photons, and an electron transfer chain that converts photonic excitation into a charge separation. The D1/D2 (PsbA/PsbD) reaction center heterodimer binds P680, the primary electron donor of PSII as well as several subsequent electron acceptors. This is Photosystem II protein D1 from Synechocystis sp. (strain PCC 6714) (Aphanocapsa sp. (strain PCC 6714)).